Consider the following 109-residue polypeptide: uncharacterized protein (109 aa).

The protein to M.jannaschii MJ1244 and MJ1245 and M.thermoautotrophicum MTH1110.

This is an uncharacterized protein from Methanococcus maripaludis (Methanococcus deltae).